The sequence spans 117 residues: UPF0251 protein DET0218 (117 aa).

It belongs to the UPF0251 family.

The polypeptide is UPF0251 protein DET0218 (Dehalococcoides mccartyi (strain ATCC BAA-2266 / KCTC 15142 / 195) (Dehalococcoides ethenogenes (strain 195))).